Consider the following 436-residue polypeptide: Testican-3 (436 aa).

Residues 1 to 22 (MLKVSAVLCVCAAAWCSQSLAA) form the signal peptide. 8 disulfide bridges follow: Cys-90–Cys-101, Cys-95–Cys-111, Cys-139–Cys-169, Cys-142–Cys-162, Cys-151–Cys-183, Cys-317–Cys-341, Cys-352–Cys-359, and Cys-361–Cys-380. The 53-residue stretch at 133 to 185 (GPILSTCKQCPVVYPSPVCGSDGHTYSFQCKLEYQACVLGKQISVKCEGHCPC) folds into the Kazal-like domain. Residues 314-380 (DPPCQTELSN…GSRINGVADC (67 aa)) enclose the Thyroglobulin type-1 domain. O-linked (Xyl...) (glycosaminoglycan) serine glycans are attached at residues Ser-387 and Ser-392. The segment at 393 to 436 (GDFHEWTDDEDDEDDIMNDEDEIEDDDEDEGDDDDGGDDHDGYI) is disordered. Acidic residues predominate over residues 399-430 (TDDEDDEDDIMNDEDEIEDDDEDEGDDDDGGD).

Post-translationally, contains chondroitin sulfate and heparan sulfate O-linked oligosaccharides. Expressed in brain.

Its subcellular location is the secreted. It localises to the extracellular space. The protein localises to the extracellular matrix. Its function is as follows. May participate in diverse steps of neurogenesis. Inhibits the processing of pro-matrix metalloproteinase 2 (MMP-2) by MT1-MMP and MT3-MMP. May interfere with tumor invasion. The chain is Testican-3 (SPOCK3) from Pongo abelii (Sumatran orangutan).